A 689-amino-acid chain; its full sequence is Beta-adrenergic receptor kinase 1 (689 aa).

An N-terminal region spans residues 1 to 190 (MADLEAVLAD…ELNIHLTMND (190 aa)). Residues 54-175 (TFEKIFSQKL…IESDKFTRFC (122 aa)) form the RGS domain. Residues 191–453 (FSVHRIIGRG…AQEIKESPFF (263 aa)) form the Protein kinase domain. Residues 197-205 (IGRGGFGEV) and Lys-220 each bind ATP. Asp-317 functions as the Proton acceptor in the catalytic mechanism. Residues 454 to 521 (RSLDWQMVFL…TISERWQQEV (68 aa)) form the AGC-kinase C-terminal domain. The PH domain maps to 558 to 652 (DCIMHGYMSK…WKKELRDAYR (95 aa)). Ser-670 is subject to Phosphoserine.

The protein belongs to the protein kinase superfamily. AGC Ser/Thr protein kinase family. GPRK subfamily. In terms of assembly, interacts with the heterodimer formed by GNB1 and GNG2. Interacts with GIT1. Interacts with, and phosphorylates chemokine-stimulated CCR5. Interacts with ARRB1. Interacts with LPAR1 and LPAR2. Interacts with RALA in response to LPAR1 activation. ADRBK1 and RALA mutually inhibit each other's binding to LPAR1. Interacts with ADRB2. Expressed at low levels in brain cortex, hippocampus, striatum, hypothalamus, cerebellum and brainstem (at protein level).

The protein localises to the cytoplasm. Its subcellular location is the cell membrane. The protein resides in the postsynapse. It localises to the presynapse. The enzyme catalyses [beta-adrenergic receptor] + ATP = [beta-adrenergic receptor]-phosphate + ADP + H(+). Its activity is regulated as follows. In contrast to other AGC family kinases, the catalytic activity is solely regulated by the binding of substrates and ligands, not by phosphorylation of the kinase domain. Its function is as follows. Specifically phosphorylates the agonist-occupied form of the beta-adrenergic and closely related receptors, probably inducing a desensitization of them. Key regulator of LPAR1 signaling. Competes with RALA for binding to LPAR1 thus affecting the signaling properties of the receptor. Desensitizes LPAR1 and LPAR2 in a phosphorylation-independent manner. Positively regulates ciliary smoothened (SMO)-dependent Hedgehog (Hh) signaling pathway by facilitating the trafficking of SMO into the cilium and the stimulation of SMO activity. Inhibits relaxation of airway smooth muscle in response to blue light. The polypeptide is Beta-adrenergic receptor kinase 1 (Rattus norvegicus (Rat)).